The following is a 207-amino-acid chain: Chloramphenicol acetyltransferase (207 aa).

The Proton acceptor role is filled by H186.

It belongs to the chloramphenicol acetyltransferase family. As to quaternary structure, homotrimer.

It carries out the reaction chloramphenicol + acetyl-CoA = chloramphenicol 3-acetate + CoA. This enzyme is an effector of chloramphenicol resistance in bacteria. This chain is Chloramphenicol acetyltransferase, found in Campylobacter coli.